The primary structure comprises 141 residues: Early nodulin-like protein 19 (141 aa).

The signal sequence occupies residues 1 to 26; the sequence is MGRSMVLISAVVLAFLVAAPIPEVTA. Residues 27–127 enclose the Phytocyanin domain; that stretch reads KKYLVGDKKF…GMKLDVLVET (101 aa). N-linked (GlcNAc...) asparagine glycosylation is found at Asn42 and Asn88. A disulfide bond links Cys80 and Cys115.

Belongs to the early nodulin-like (ENODL) family.

Its function is as follows. May act as a carbohydrate transporter. The polypeptide is Early nodulin-like protein 19 (Arabidopsis thaliana (Mouse-ear cress)).